A 222-amino-acid polypeptide reads, in one-letter code: Large ribosomal subunit protein uL4 (222 aa).

The protein belongs to the universal ribosomal protein uL4 family. Part of the 50S ribosomal subunit.

One of the primary rRNA binding proteins, this protein initially binds near the 5'-end of the 23S rRNA. It is important during the early stages of 50S assembly. It makes multiple contacts with different domains of the 23S rRNA in the assembled 50S subunit and ribosome. In terms of biological role, forms part of the polypeptide exit tunnel. This chain is Large ribosomal subunit protein uL4, found in Chlamydia trachomatis serovar L2 (strain ATCC VR-902B / DSM 19102 / 434/Bu).